The chain runs to 618 residues: Uptake hydrogenase large subunit (618 aa).

4 residues coordinate Ni(2+): cysteine 75, cysteine 78, cysteine 597, and cysteine 600.

The protein belongs to the [NiFe]/[NiFeSe] hydrogenase large subunit family. As to quaternary structure, heterodimer of a large and a small subunit. It depends on Ni(2+) as a cofactor.

It localises to the cell membrane. It catalyses the reaction H2 + A = AH2. Functionally, this enzyme recycles the H(2) produced by nitrogenase to increase the production of ATP and to protect nitrogenase against inhibition or damage by O(2) under carbon- or phosphate-limited conditions. This Cupriavidus necator (strain ATCC 17699 / DSM 428 / KCTC 22496 / NCIMB 10442 / H16 / Stanier 337) (Ralstonia eutropha) protein is Uptake hydrogenase large subunit (hoxG).